A 378-amino-acid chain; its full sequence is Erythronate-4-phosphate dehydrogenase (378 aa).

Residues Ser-45 and Thr-66 each contribute to the substrate site. Residues Asp-146 and Thr-175 each contribute to the NAD(+) site. Residue Arg-208 is part of the active site. Asp-232 provides a ligand contact to NAD(+). Glu-237 is an active-site residue. His-254 acts as the Proton donor in catalysis. An NAD(+)-binding site is contributed by Gly-257. Tyr-258 lines the substrate pocket.

Belongs to the D-isomer specific 2-hydroxyacid dehydrogenase family. PdxB subfamily. As to quaternary structure, homodimer.

The protein resides in the cytoplasm. It carries out the reaction 4-phospho-D-erythronate + NAD(+) = (R)-3-hydroxy-2-oxo-4-phosphooxybutanoate + NADH + H(+). It functions in the pathway cofactor biosynthesis; pyridoxine 5'-phosphate biosynthesis; pyridoxine 5'-phosphate from D-erythrose 4-phosphate: step 2/5. In terms of biological role, catalyzes the oxidation of erythronate-4-phosphate to 3-hydroxy-2-oxo-4-phosphonooxybutanoate. This chain is Erythronate-4-phosphate dehydrogenase, found in Cronobacter sakazakii (strain ATCC BAA-894) (Enterobacter sakazakii).